Consider the following 323-residue polypeptide: Elongation factor P--(R)-beta-lysine ligase (323 aa).

74-76 (SPE) provides a ligand contact to substrate. ATP is bound by residues 98 to 100 (RNE) and N107. Y116 serves as a coordination point for substrate. 242–243 (EL) lines the ATP pocket. Residue E249 coordinates substrate. Position 298 (G298) interacts with ATP.

It belongs to the class-II aminoacyl-tRNA synthetase family. EpmA subfamily. As to quaternary structure, homodimer.

The enzyme catalyses D-beta-lysine + L-lysyl-[protein] + ATP = N(6)-((3R)-3,6-diaminohexanoyl)-L-lysyl-[protein] + AMP + diphosphate + H(+). Functionally, with EpmB is involved in the beta-lysylation step of the post-translational modification of translation elongation factor P (EF-P). Catalyzes the ATP-dependent activation of (R)-beta-lysine produced by EpmB, forming a lysyl-adenylate, from which the beta-lysyl moiety is then transferred to the epsilon-amino group of a conserved specific lysine residue in EF-P. This chain is Elongation factor P--(R)-beta-lysine ligase, found in Vibrio vulnificus (strain YJ016).